The sequence spans 84 residues: Acyl carrier protein homolog (84 aa).

One can recognise a Carrier domain in the interval 4-79 (RDILLKIKEI…ELIAEVKHLI (76 aa)). Serine 39 is subject to O-(pantetheine 4'-phosphoryl)serine.

Post-translationally, 4'-phosphopantetheine is transferred from CoA to a specific serine of the apo-ACP-like protein.

It participates in lipid metabolism; fatty acid biosynthesis. Its function is as follows. Carrier of the growing fatty acid chain in fatty acid biosynthesis. This chain is Acyl carrier protein homolog, found in Mycoplasma pneumoniae (strain ATCC 29342 / M129 / Subtype 1) (Mycoplasmoides pneumoniae).